A 247-amino-acid polypeptide reads, in one-letter code: UPF0309 protein LMOf2365_2617 (247 aa).

Residues 31 to 214 (VAESIENDGV…ETMVNDNFTP (184 aa)) form the SIS domain.

The protein belongs to the UPF0309 family.

The sequence is that of UPF0309 protein LMOf2365_2617 from Listeria monocytogenes serotype 4b (strain F2365).